Consider the following 97-residue polypeptide: Apolipoprotein C-II (97 aa).

Residues Met-1–Gly-22 form the signal peptide. Residues Ser-63 to Met-71 are lipid binding. The lipoprotein lipase cofactor stretch occupies residues Ser-75–Glu-97.

This sequence belongs to the apolipoprotein C2 family. Adult and fetal liver, intestine and peritoneal macrophages.

Its subcellular location is the secreted. Component of chylomicrons, very low-density lipoproteins (VLDL), low-density lipoproteins (LDL), and high-density lipoproteins (HDL) in plasma. Plays an important role in lipoprotein metabolism as an activator of lipoprotein lipase. The protein is Apolipoprotein C-II (Apoc2) of Mus musculus (Mouse).